The following is a 1039-amino-acid chain: Antigen 43 (1039 aa).

A signal peptide spans 1 to 52 (MKRHLNTCYRLVWNHMTGAFVVASELARARGKRGGVAVALSLAAVTSLPVLA). Residues 737 to 1039 (VNGENNSVRL…NGQATLNVTF (303 aa)) enclose the Autotransporter domain.

In terms of assembly, interaction with TamA of the translocation and assembly module (TAM) initiates insertion in the outer membrane.

The protein resides in the periplasm. It is found in the secreted. It localises to the cell surface. Its subcellular location is the cell outer membrane. Functionally, controls colony form variation and autoaggregation. May function as an adhesin. This Escherichia coli (strain K12) protein is Antigen 43 (flu).